Here is a 571-residue protein sequence, read N- to C-terminus: MEILSGAEMVVRSLIDQGIQHIFGYPGGAVLDIYDALKTVGGIEHILVRHEQAATHMADGYSRSTGKTGVVLVTSGPGATNAITGIATAYMDSIPMVVISGQVASSLIGYDAFQECDMIGISRPIVKHSFLVKKTEDIPIVFKKAFWLASSGRPGPIVIDLPKDILKKDNKYLYKWPDNINIRSYNPTTKGHIGQIKKALHTLLKAQRPVIYAGGGIISSNSSEELRIFAEKINCPVTTSLMGLGSFPGTHDQNISMLGMHGTYEANMTMHHADVIFAIGVRFDDRTTNNLNKYCPNAIVLHVDIDPTSISKTVSANIPIVGDAKHVLQKMIELLKKEKKISLLEDWWNTIKKWKKINSLQYNQLSNKIKPQTVIKTLFKLTKGTSYITSDVGQHQMFTALYYPFNKPRRWINSGGLGTMGFGLPAALGVKLALPKETVICITGDGSIQMNIQELSTARQYNLAVLILNLNNSSLGMVKQWQDMIYSGRHSHSYMDSLPDFVKLSESYGHFGIQITEPIELEEKLMLALSKLSDGHLVFVDVQIDNSEHVYPMQIQGGGMNEMRLRKKEVA.

Residue Glu51 participates in thiamine diphosphate binding. Residues Arg153, 261-282, and 304-323 contribute to the FAD site; these read HGTYEANMTMHHADVIFAIGVR and DIDPTSISKTVSANIPIVGD. The tract at residues 394–474 is thiamine pyrophosphate binding; the sequence is QHQMFTALYY…VLILNLNNSS (81 aa). Residues Asp445 and Asn472 each contribute to the Mg(2+) site.

This sequence belongs to the TPP enzyme family. As to quaternary structure, dimer of large and small chains. Mg(2+) serves as cofactor. The cofactor is thiamine diphosphate.

The catalysed reaction is 2 pyruvate + H(+) = (2S)-2-acetolactate + CO2. It participates in amino-acid biosynthesis; L-isoleucine biosynthesis; L-isoleucine from 2-oxobutanoate: step 1/4. It functions in the pathway amino-acid biosynthesis; L-valine biosynthesis; L-valine from pyruvate: step 1/4. The chain is Acetolactate synthase large subunit (ilvI) from Buchnera aphidicola subsp. Acyrthosiphon pisum (strain APS) (Acyrthosiphon pisum symbiotic bacterium).